We begin with the raw amino-acid sequence, 324 residues long: MKRPCEDSTSDSDMDETIDVGSENNYSGQSNGSFIRCGSPTTTSQVMARKKRRGIIEKRRRDRINNSLSELRRLVPTAFEKQGSAKLEKAEILQMTVDHLKMLQATGGKGYFDAHSLAMDFLSIGFRECLTEVARYLSSVEGLDSSDPLRVRLVSHLSSCASQREAAAMTTSIAHHQQALHPHHWAAALHPIPAAFLQQSGLPSSESSSGRLSEAPQRGAALFSHSDSALRAPSTGSVAPCVPPLSTSLLSLSATVHAAAAAAAAQTFPLSFPAGFPLFSPSVTASSVASSTVSSSVSTSTTSQQSSGSSSKPYRPWGTEVGAF.

Residues 1–34 are disordered; sequence MKRPCEDSTSDSDMDETIDVGSENNYSGQSNGSF. Acidic residues predominate over residues 8–18; that stretch reads STSDSDMDETI. Over residues 22-34 the composition is skewed to polar residues; the sequence is SENNYSGQSNGSF. A bHLH domain is found at 48-103; the sequence is ARKKRRGIIEKRRRDRINNSLSELRRLVPTAFEKQGSAKLEKAEILQMTVDHLKML. Residues 122 to 157 enclose the Orange domain; sequence LSIGFRECLTEVARYLSSVEGLDSSDPLRVRLVSHL. The span at 294 to 311 shows a compositional bias: low complexity; sequence SSSVSTSTTSQQSSGSSS. The tract at residues 294 to 324 is disordered; sequence SSSVSTSTTSQQSSGSSSKPYRPWGTEVGAF. The short motif at 314–317 is the YRPW motif element; that stretch reads YRPW.

The protein belongs to the HEY family.

Its subcellular location is the nucleus. Its function is as follows. Transcriptional repressor. Downstream effector of Notch signaling which regulates cell fate choice in angioblasts. Represses the venous cell fate, thereby promoting the arterial cell fate and aorta formation. The sequence is that of Hairy/enhancer-of-split related with YRPW motif protein 2 (hey2) from Danio rerio (Zebrafish).